A 319-amino-acid polypeptide reads, in one-letter code: Cytochrome f (319 aa).

An N-terminal signal peptide occupies residues 1-35 (METRNIFSWIKEQITRSISVSLMIYIITRTAVSNA). Heme is bound by residues tyrosine 36, cysteine 56, cysteine 59, and histidine 60. Residues 285–305 (VQGLLFFLASVILAQIFLVLK) form a helical membrane-spanning segment.

It belongs to the cytochrome f family. As to quaternary structure, the 4 large subunits of the cytochrome b6-f complex are cytochrome b6, subunit IV (17 kDa polypeptide, petD), cytochrome f and the Rieske protein, while the 4 small subunits are PetG, PetL, PetM and PetN. The complex functions as a dimer. Heme is required as a cofactor.

The protein localises to the plastid. It is found in the chloroplast thylakoid membrane. Component of the cytochrome b6-f complex, which mediates electron transfer between photosystem II (PSII) and photosystem I (PSI), cyclic electron flow around PSI, and state transitions. The polypeptide is Cytochrome f (Coffea arabica (Arabian coffee)).